Consider the following 279-residue polypeptide: MISIIIDSLRESALHIDSLLKDTSTSYLQSINASGDMQLEIDVRVDKFLSEKLLNLPCVKAICSEEQEEIMYSENKNAPYIIAYDPLDGSSLIDSNLSIGTIFGIYNEELSAKHLIASGYIIYGPRLEMVVAQEQALHYRYNGNMWRNLGALALNTKGKINAPGGTQKHWENKHKAMIESLFAQGYRLRYSGGMVPDLHQILIKGGGLFSYPATSDAPNGKLRKLFEVFPFAFVYEKAGGFATNGTYRILELEVAHLHDSTPCFFGSQSEMNLVKEVYE.

Residues Glu65, Asp85, Leu87, and Asp88 each coordinate Mg(2+). Substrate is bound by residues 88–91, Tyr190, and Lys221; that span reads DGSS. Glu227 contacts Mg(2+).

It belongs to the FBPase class 1 family. In terms of assembly, homotetramer. Requires Mg(2+) as cofactor.

The protein localises to the cytoplasm. It carries out the reaction beta-D-fructose 1,6-bisphosphate + H2O = beta-D-fructose 6-phosphate + phosphate. It functions in the pathway carbohydrate biosynthesis; gluconeogenesis. In Helicobacter hepaticus (strain ATCC 51449 / 3B1), this protein is Fructose-1,6-bisphosphatase class 1.